Here is a 228-residue protein sequence, read N- to C-terminus: MITPLAPSTPSPVLTPIEARVLGTLMEKARTVPDSYPLTLNTLLLGCNQKSSREPLMELTEADVAAALNTLKEAHLVRESSGSRTTRFEHNFQRGIGVYEQAAVLLGLLMLRGPQTAGELRLNTERWYKFADISSVEGFLEELQDRSAEKGGPLVVKLARGPGTREQRWAHLLCGPVDATQTGLGRSSEGLPGNTAERLERLESELANLRETVQKLCAELGVSPPEQV.

Belongs to the UPF0502 family.

This is UPF0502 protein Rfer_1648 from Albidiferax ferrireducens (strain ATCC BAA-621 / DSM 15236 / T118) (Rhodoferax ferrireducens).